The primary structure comprises 440 residues: Trigger factor (440 aa).

The PPIase FKBP-type domain occupies 163 to 248 (GEIVSVTFEA…VHVIKERTLP (86 aa)).

It belongs to the FKBP-type PPIase family. Tig subfamily.

Its subcellular location is the cytoplasm. The enzyme catalyses [protein]-peptidylproline (omega=180) = [protein]-peptidylproline (omega=0). In terms of biological role, involved in protein export. Acts as a chaperone by maintaining the newly synthesized protein in an open conformation. Functions as a peptidyl-prolyl cis-trans isomerase. This chain is Trigger factor, found in Solidesulfovibrio magneticus (strain ATCC 700980 / DSM 13731 / RS-1) (Desulfovibrio magneticus).